We begin with the raw amino-acid sequence, 303 residues long: uncharacterized protein (303 aa).

The next 4 helical transmembrane spans lie at 55–77, 92–111, 208–230, and 240–257; these read FLVK…LFIQ, PAVF…TKII, FSLP…ATSL, and IPHI…KILI.

It localises to the cell membrane. This is an uncharacterized protein from Bacillus subtilis (strain 168).